Here is a 162-residue protein sequence, read N- to C-terminus: Large ribosomal subunit protein uL10 (162 aa).

This sequence belongs to the universal ribosomal protein uL10 family. Part of the ribosomal stalk of the 50S ribosomal subunit. The N-terminus interacts with L11 and the large rRNA to form the base of the stalk. The C-terminus forms an elongated spine to which L12 dimers bind in a sequential fashion forming a multimeric L10(L12)X complex.

In terms of biological role, forms part of the ribosomal stalk, playing a central role in the interaction of the ribosome with GTP-bound translation factors. This chain is Large ribosomal subunit protein uL10, found in Vibrio parahaemolyticus serotype O3:K6 (strain RIMD 2210633).